The chain runs to 207 residues: Protein-L-isoaspartate O-methyltransferase (207 aa).

The active site involves serine 56.

Belongs to the methyltransferase superfamily. L-isoaspartyl/D-aspartyl protein methyltransferase family.

The protein resides in the cytoplasm. The enzyme catalyses [protein]-L-isoaspartate + S-adenosyl-L-methionine = [protein]-L-isoaspartate alpha-methyl ester + S-adenosyl-L-homocysteine. In terms of biological role, catalyzes the methyl esterification of L-isoaspartyl residues in peptides and proteins that result from spontaneous decomposition of normal L-aspartyl and L-asparaginyl residues. It plays a role in the repair and/or degradation of damaged proteins. In Pyrobaculum islandicum (strain DSM 4184 / JCM 9189 / GEO3), this protein is Protein-L-isoaspartate O-methyltransferase.